Here is a 302-residue protein sequence, read N- to C-terminus: Ornithine carbamoyltransferase (302 aa).

Carbamoyl phosphate is bound by residues 53 to 56 (STRT), glutamine 80, arginine 104, and 131 to 134 (HPCQ). L-ornithine contacts are provided by residues asparagine 162, aspartate 219, and 223–224 (SM). Residues 259 to 260 (CL) and arginine 287 contribute to the carbamoyl phosphate site.

The protein belongs to the aspartate/ornithine carbamoyltransferase superfamily. OTCase family.

The protein localises to the cytoplasm. It catalyses the reaction carbamoyl phosphate + L-ornithine = L-citrulline + phosphate + H(+). It participates in amino-acid biosynthesis; L-arginine biosynthesis; L-arginine from L-ornithine and carbamoyl phosphate: step 1/3. Its function is as follows. Reversibly catalyzes the transfer of the carbamoyl group from carbamoyl phosphate (CP) to the N(epsilon) atom of ornithine (ORN) to produce L-citrulline. The polypeptide is Ornithine carbamoyltransferase (Hydrogenovibrio crunogenus (strain DSM 25203 / XCL-2) (Thiomicrospira crunogena)).